Reading from the N-terminus, the 456-residue chain is FAD-dependent monooxygenase sor5 (456 aa).

Residues 18–38 (PLEVAIVGGGLTGLALALGLL) form a helical membrane-spanning segment. An N-linked (GlcNAc...) asparagine glycan is attached at N43. Positions 48 and 119 each coordinate FAD. R200 is a catalytic residue. FAD is bound by residues D331 and A344.

Belongs to the paxM FAD-dependent monooxygenase family. FAD is required as a cofactor.

The protein localises to the membrane. Its pathway is secondary metabolite biosynthesis. FAD-dependent monooxygenase; part of the SOR gene cluster that mediates the biosynthesis of sorbicillinoids, a diverse group of yellow secondary metabolites that restrict growth of competing pathogenic fungi but not of bacteria. Sorbicillinoids biosynthesis requires the action of two PKSs. The SOR cluster is required for the production of trichodimerol and dihydrotrichotetronin, with sor2 being sufficient for production of trichodimerol, but not dihydrotrichotetronin in the light. Sor1 iteratively combines three acetyl units and the growing chain is modified by the ketoacyl reductase subunit, and optional by the enoyl reductase subunit in the second cycle. The polyketide is then handed over to the PKS sor2, which adds three more acetyl units, and two methyl groups. Sor2 releases an aldehyde, which undergoes spontaneous cyclization resulting in the formation of sorbicillin or 2',3'-dihydrosorbicillin. The monooxygenase sor5 oxidizes sorbicillin and 2',3'-dihydrosorbicillin to 2',3'-dihydrosorbicillinol and sorbicillinol, respectively. The oxidoreductase sor8 further converts sorbicillinol into oxosorbicillinol. Sorbicillinol is the building block for the other sorbicillinoids such as disorbicillinol, bisvertinolon, dihydrobisvertinolone, and dihydrotrichotetronine. In Hypocrea jecorina (strain QM6a) (Trichoderma reesei), this protein is FAD-dependent monooxygenase sor5.